A 173-amino-acid chain; its full sequence is Large ribosomal subunit protein bL17 (173 aa).

Residues 136 to 173 (AEEEAPAVEAEATEATEAPVEEAAAVEAEAPADAEKAE) form a disordered region. Residues 138–149 (EEAPAVEAEATE) are compositionally biased toward acidic residues. Residues 150-166 (ATEAPVEEAAAVEAEAP) show a composition bias toward low complexity.

This sequence belongs to the bacterial ribosomal protein bL17 family. As to quaternary structure, part of the 50S ribosomal subunit. Contacts protein L32.

The sequence is that of Large ribosomal subunit protein bL17 from Bifidobacterium longum subsp. infantis (strain ATCC 15697 / DSM 20088 / JCM 1222 / NCTC 11817 / S12).